The primary structure comprises 271 residues: Putative hydro-lyase Mrad2831_3350 (271 aa).

Belongs to the D-glutamate cyclase family.

This chain is Putative hydro-lyase Mrad2831_3350, found in Methylobacterium radiotolerans (strain ATCC 27329 / DSM 1819 / JCM 2831 / NBRC 15690 / NCIMB 10815 / 0-1).